The following is a 98-amino-acid chain: NADH-ubiquinone oxidoreductase chain 4L (98 aa).

3 consecutive transmembrane segments (helical) span residues 1 to 21, 28 to 48, and 59 to 79; these read MMSISLNLTMAFLLALAGVLI, STLLCLEGMMLSLFILMALLI, and APLILLVFSACEAGVGLALLV.

Belongs to the complex I subunit 4L family. Core subunit of respiratory chain NADH dehydrogenase (Complex I) which is composed of 45 different subunits.

The protein resides in the mitochondrion inner membrane. It catalyses the reaction a ubiquinone + NADH + 5 H(+)(in) = a ubiquinol + NAD(+) + 4 H(+)(out). Its function is as follows. Core subunit of the mitochondrial membrane respiratory chain NADH dehydrogenase (Complex I) which catalyzes electron transfer from NADH through the respiratory chain, using ubiquinone as an electron acceptor. Part of the enzyme membrane arm which is embedded in the lipid bilayer and involved in proton translocation. The protein is NADH-ubiquinone oxidoreductase chain 4L (MT-ND4L) of Osphranter robustus (Wallaroo).